The chain runs to 35 residues: AACLGMFESCDPNNDKCCPNRECNRKHKWCKYKLW.

Intrachain disulfides connect Cys3–Cys18, Cys10–Cys23, and Cys17–Cys30.

Belongs to the neurotoxin 10 (Hwtx-1) family. 59 (Tltx) subfamily. Monomer. In terms of tissue distribution, expressed by the venom gland.

The protein resides in the secreted. In terms of biological role, blocks Kv4.2/KCND2 voltage-gated potassium channels (IC(50) is 193.0 nM) by shifting the voltage-dependence of channel activation to more depolarized potentials. The toxin is thought to bind to the S3-S4 linker region of the voltage sensor domain. This chain is Kappa-theraphotoxin-Tb1a, found in Theraphosa blondi (Goliath birdeating spider).